An 89-amino-acid polypeptide reads, in one-letter code: MQACMVPGLALCLLLGPLAGAKPVQEEGDPYAELPAMPYWPFSTSDFWNYVQHFQALGAYPQIEDMARTFFAHFPLGSTLGFHVPYQED.

Positions 1-21 (MQACMVPGLALCLLLGPLAGA) are cleaved as a signal peptide.

It belongs to the otospiralin family. Ear specific.

It localises to the secreted. Functionally, may be essential for the survival of the neurosensory epithelium of the inner ear. This is Otospiralin (OTOS) from Homo sapiens (Human).